Here is a 228-residue protein sequence, read N- to C-terminus: Ribose-5-phosphate isomerase A (228 aa).

Substrate contacts are provided by residues 32 to 35 (TGST), 85 to 88 (DGAD), and 98 to 101 (KGGG). The active-site Proton acceptor is the Glu107. Residue Lys125 coordinates substrate.

The protein belongs to the ribose 5-phosphate isomerase family. As to quaternary structure, homodimer.

The catalysed reaction is aldehydo-D-ribose 5-phosphate = D-ribulose 5-phosphate. Its pathway is carbohydrate degradation; pentose phosphate pathway; D-ribose 5-phosphate from D-ribulose 5-phosphate (non-oxidative stage): step 1/1. Its function is as follows. Catalyzes the reversible conversion of ribose-5-phosphate to ribulose 5-phosphate. This Ralstonia pickettii (strain 12J) protein is Ribose-5-phosphate isomerase A.